Reading from the N-terminus, the 206-residue chain is MLKRLESLLAQADMALTSAQKEKLLGYVALLHKWNKAYNLTSVRSPEQMLVRHIMDSIVVNPHLRGDRFIDVGTGPGLPGIPLAIVRPDAHFTLLDSLGKRICFLRQVQHELGLDNITAVQSRVESFAPPAGFDGVISRAFASLGDMLTWCAALPRKEEGRFYALKGQLSEEELNALPAGFRVESVIGLQVPCLEGERHIVVLAAN.

S-adenosyl-L-methionine is bound by residues Gly73, Leu78, 124-125, and Arg139; that span reads VE.

Belongs to the methyltransferase superfamily. RNA methyltransferase RsmG family.

It localises to the cytoplasm. The enzyme catalyses guanosine(527) in 16S rRNA + S-adenosyl-L-methionine = N(7)-methylguanosine(527) in 16S rRNA + S-adenosyl-L-homocysteine. In terms of biological role, specifically methylates the N7 position of guanine in position 527 of 16S rRNA. The chain is Ribosomal RNA small subunit methyltransferase G from Sodalis glossinidius (strain morsitans).